The following is a 290-amino-acid chain: MSLTSRLYKPRLFSLPSQHSFRALPILSPPLRSSCIPAPLSVRASLSTRSIATSIAMGEAAADAGMDAVQRRLMFDDECILVDEVDCVVGHESKYNCHLWEKIESGNMLHRAFTVFLFNSKFELLLQQRSATKVTFPLVWTNTCCSHPLYRESELIDENNLGVRNAAQRKLLDELGIPAEDVPVDEFTPVSRMLYKAPSDGKWGEHELDYLLFIVRDVGIHPNPDEVADIKYVNREQLKELLRKADAGEEGLKLSPWFRLVVDNFLPKWWDHVEKGTLSEAVDMKTIHNL.

In terms of domain architecture, Nudix hydrolase spans 108-260; the sequence is MLHRAFTVFL…GLKLSPWFRL (153 aa). Active-site residues include C145 and E207.

This sequence belongs to the IPP isomerase type 1 family.

The enzyme catalyses isopentenyl diphosphate = dimethylallyl diphosphate. Its pathway is isoprenoid biosynthesis; dimethylallyl diphosphate biosynthesis; dimethylallyl diphosphate from isopentenyl diphosphate: step 1/1. The protein operates within porphyrin-containing compound metabolism; chlorophyll biosynthesis. In terms of biological role, catalyzes the 1,3-allylic rearrangement of the homoallylic substrate isopentenyl (IPP) to its highly electrophilic allylic isomer, dimethylallyl diphosphate (DMAPP). In Clarkia xantiana (Gunsight clarkia), this protein is Isopentenyl-diphosphate Delta-isomerase II (IPI2).